Reading from the N-terminus, the 79-residue chain is Toxin ICK-20 (79 aa).

The signal sequence occupies residues 1–20 (MMKYFLVLCLVVLGVAAVQA). 4 cysteine pairs are disulfide-bonded: cysteine 43-cysteine 57, cysteine 50-cysteine 61, cysteine 56-cysteine 78, and cysteine 68-cysteine 74. Asparagine 71 carries an N-linked (GlcNAc...) asparagine glycan.

Belongs to the neurotoxin 13 (insecticidal toxin ABC) family. ICK-21 subfamily. As to expression, expressed by the venom gland.

It is found in the secreted. Functionally, ion channel inhibitor. This is Toxin ICK-20 from Trittame loki (Brush-footed trapdoor spider).